The chain runs to 700 residues: MARKTPIERYRNIGISAHIDAGKTTTTERILFYTGVNHKIGEVHDGAATMDWMEQEQERGITITSAATTAFWRGMAGNFPEHRINIIDTPGHVDFTIEVERSMRVLDGACMVYCAVGGVQPQSETVWRQANKYGVPRLAFVNKMDRTGANFFKVYEQLRTRLRANPVPIVIPIGAEDTFTGVIDLVKMKAIIWDEASQGTKFEYADIPAELQASAEEWREKLVEAAAESSEELMNKYLETGTLEEAEINAAIRQRTIAGEIHPMLCGTAFKNKGVQRMLDAVIEYLPSPIDIPPVDGTDDDGNEVQRRADDSEKFSALAFKLMSDPFVGQLTFVRVYSGVLKSGDTVYNPIKGKKERIGRILQMHANNREEIKEVLAGDIAAVVGLKDVTTGETLCDIDAHVTLERMEFPEPVISQAVEPKSKADQEKMGLALSRLAQEDPSFRVRSDEESGQTIISGMGELHLEILVDRMKREFGVEANVGKPQVAYRETIRKTCDEVEGKFVKQSGGRGQYGHVVLKVEPLAPGGGYEFVDAIKGGVVPREYIPAVDKGIQETLPAGILAGYPVVDVKVTLFFGSYHDVDSNENAFKMAGSMAFKEGMRKASPVLLEPMMAVEVETPEDYAGGVMGDLSSRRGMVQGMDDMVGGGKIIKAEVPLAEMFGYATNLRSLTQGRATYTMEFKHYSEAPKNVADEVIAARGK.

In terms of domain architecture, tr-type G spans 8-290; it reads ERYRNIGISA…AVIEYLPSPI (283 aa). Residues 17-24, 88-92, and 142-145 contribute to the GTP site; these read AHIDAGKT, DTPGH, and NKMD.

It belongs to the TRAFAC class translation factor GTPase superfamily. Classic translation factor GTPase family. EF-G/EF-2 subfamily.

The protein localises to the cytoplasm. Catalyzes the GTP-dependent ribosomal translocation step during translation elongation. During this step, the ribosome changes from the pre-translocational (PRE) to the post-translocational (POST) state as the newly formed A-site-bound peptidyl-tRNA and P-site-bound deacylated tRNA move to the P and E sites, respectively. Catalyzes the coordinated movement of the two tRNA molecules, the mRNA and conformational changes in the ribosome. This is Elongation factor G 1 from Bordetella avium (strain 197N).